Here is a 945-residue protein sequence, read N- to C-terminus: Nonsense-mediated mRNA decay factor SMG8 (945 aa).

Disordered stretches follow at residues 563–604 (RAEP…SANE) and 633–671 (AEAE…ERSA).

Belongs to the SMG8 family.

Its function is as follows. Involved in nonsense-mediated decay (NMD) of mRNAs containing premature stop codons. Probable component of kinase complex containing nonC and recruited to stalled ribosomes. This chain is Nonsense-mediated mRNA decay factor SMG8, found in Drosophila grimshawi (Hawaiian fruit fly).